The following is a 436-amino-acid chain: UDP-N-acetylglucosamine 1-carboxyvinyltransferase 1 (436 aa).

22–23 (KN) contributes to the phosphoenolpyruvate binding site. Arginine 93 is a binding site for UDP-N-acetyl-alpha-D-glucosamine. The Proton donor role is filled by cysteine 117. Cysteine 117 is subject to 2-(S-cysteinyl)pyruvic acid O-phosphothioketal. UDP-N-acetyl-alpha-D-glucosamine is bound by residues 122–126 (RPIDQ), aspartate 306, and valine 328.

It belongs to the EPSP synthase family. MurA subfamily.

It localises to the cytoplasm. It catalyses the reaction phosphoenolpyruvate + UDP-N-acetyl-alpha-D-glucosamine = UDP-N-acetyl-3-O-(1-carboxyvinyl)-alpha-D-glucosamine + phosphate. It functions in the pathway cell wall biogenesis; peptidoglycan biosynthesis. Its function is as follows. Cell wall formation. Adds enolpyruvyl to UDP-N-acetylglucosamine. Essential for cell growth. The sequence is that of UDP-N-acetylglucosamine 1-carboxyvinyltransferase 1 from Bacillus subtilis (strain 168).